The sequence spans 887 residues: ATP-dependent DNA helicase srs2 (887 aa).

Residues 9–304 (KFLNEEQRIS…LHLERNYRSA (296 aa)) enclose the UvrD-like helicase ATP-binding domain. Residues 33 to 38 (GSGKTR) and R302 contribute to the ATP site. Residues 305 to 597 (KPILELALSI…TISTLHAAKG (293 aa)) form the UvrD-like helicase C-terminal domain.

It belongs to the helicase family. UvrD subfamily.

It is found in the nucleus. It carries out the reaction Couples ATP hydrolysis with the unwinding of duplex DNA by translocating in the 3'-5' direction.. It catalyses the reaction ATP + H2O = ADP + phosphate + H(+). ATP-dependent DNA helicase involved in DNA repair at least for UV-induced lesions. Also aids the recombinational repair of camptothecin-induced collapsed replication forks. In Schizosaccharomyces pombe (strain 972 / ATCC 24843) (Fission yeast), this protein is ATP-dependent DNA helicase srs2 (srs2).